The primary structure comprises 855 residues: DNA mismatch repair protein MutS (855 aa).

613–620 (GPNMGGKS) lines the ATP pocket. The interval 796 to 817 (TTSLPHEQPRAKPGKPAIPQQS) is disordered.

It belongs to the DNA mismatch repair MutS family.

In terms of biological role, this protein is involved in the repair of mismatches in DNA. It is possible that it carries out the mismatch recognition step. This protein has a weak ATPase activity. The chain is DNA mismatch repair protein MutS from Pseudomonas syringae pv. tomato (strain ATCC BAA-871 / DC3000).